We begin with the raw amino-acid sequence, 369 residues long: Glutamate 5-kinase (369 aa).

Lys9 is an ATP binding site. Ser49, Asp136, and Asn148 together coordinate substrate. ATP-binding positions include Thr168–Asp169 and Thr210–Lys216. The 81-residue stretch at Arg275–Trp355 folds into the PUA domain.

Belongs to the glutamate 5-kinase family.

It is found in the cytoplasm. The catalysed reaction is L-glutamate + ATP = L-glutamyl 5-phosphate + ADP. Its pathway is amino-acid biosynthesis; L-proline biosynthesis; L-glutamate 5-semialdehyde from L-glutamate: step 1/2. Catalyzes the transfer of a phosphate group to glutamate to form L-glutamate 5-phosphate. This is Glutamate 5-kinase from Neisseria meningitidis serogroup A / serotype 4A (strain DSM 15465 / Z2491).